The primary structure comprises 236 residues: Geranylgeranylglyceryl phosphate synthase (236 aa).

Lys-13 contributes to the sn-glycerol 1-phosphate binding site. 2 residues coordinate Mg(2+): Asp-15 and Thr-42. Residues 161–166 (YVEYSG), Gly-191, and 211–212 (GD) contribute to the sn-glycerol 1-phosphate site.

The protein belongs to the GGGP/HepGP synthase family. Group I subfamily. Mg(2+) is required as a cofactor.

The protein localises to the cytoplasm. It carries out the reaction sn-glycerol 1-phosphate + (2E,6E,10E)-geranylgeranyl diphosphate = sn-3-O-(geranylgeranyl)glycerol 1-phosphate + diphosphate. The protein operates within membrane lipid metabolism; glycerophospholipid metabolism. Prenyltransferase that catalyzes the transfer of the geranylgeranyl moiety of geranylgeranyl diphosphate (GGPP) to the C3 hydroxyl of sn-glycerol-1-phosphate (G1P). This reaction is the first ether-bond-formation step in the biosynthesis of archaeal membrane lipids. In Halobacterium salinarum (strain ATCC 700922 / JCM 11081 / NRC-1) (Halobacterium halobium), this protein is Geranylgeranylglyceryl phosphate synthase.